Reading from the N-terminus, the 197-residue chain is NADH-quinone oxidoreductase subunit C (197 aa).

The protein belongs to the complex I 30 kDa subunit family. NDH-1 is composed of 14 different subunits. Subunits NuoB, C, D, E, F, and G constitute the peripheral sector of the complex.

It localises to the cell inner membrane. The catalysed reaction is a quinone + NADH + 5 H(+)(in) = a quinol + NAD(+) + 4 H(+)(out). Functionally, NDH-1 shuttles electrons from NADH, via FMN and iron-sulfur (Fe-S) centers, to quinones in the respiratory chain. The immediate electron acceptor for the enzyme in this species is believed to be ubiquinone. Couples the redox reaction to proton translocation (for every two electrons transferred, four hydrogen ions are translocated across the cytoplasmic membrane), and thus conserves the redox energy in a proton gradient. This Neisseria gonorrhoeae (strain ATCC 700825 / FA 1090) protein is NADH-quinone oxidoreductase subunit C.